The following is a 138-amino-acid chain: RuBisCO chaperone RbcX (138 aa).

The segment at 118 to 138 (VDNFPSETSNGESNNNDSPPS) is disordered. Polar residues predominate over residues 122–138 (PSETSNGESNNNDSPPS).

It belongs to the RbcX family. As to quaternary structure, homodimer. Interacts with the exposed C-terminal peptide of RbcL via its central cleft, contacts a second RbcL monomer via its peripheral polar surface.

It localises to the carboxysome. It is found in the cytoplasm. An RbcL-specific chaperone. The central cleft of the RbcX homodimer (RbcX2) binds the C-terminus of an RbcL monomer, stabilizing the C-terminus and probably preventing its reassociation with chaperonin GroEL-ES. At the same time the peripheral region of RbcX2 binds a second RbcL monomer, bridging the RbcL homodimers in the correct orientation. The RbcX2(2)-bound RbcL dimers then assemble into the RbcL8 core (RbcL8-(RbcX2)8). RbcS binding triggers the release of RbcX2. The chain is RuBisCO chaperone RbcX from Synechocystis sp. (strain ATCC 27184 / PCC 6803 / Kazusa).